The primary structure comprises 300 residues: ATP-dependent (S)-NAD(P)H-hydrate dehydratase (300 aa).

The YjeF C-terminal domain maps to 6–297 (YAGKIKEFIP…GCIHQSFTSL (292 aa)). (6S)-NADPHX contacts are provided by residues Gly106 and 158–164 (NEVEFKR). ATP-binding positions include 188–192 (KGSTD) and 218–227 (GSNRRCGGQG). Asp228 is a (6S)-NADPHX binding site.

The protein belongs to the NnrD/CARKD family. Mg(2+) is required as a cofactor.

It catalyses the reaction (6S)-NADHX + ATP = ADP + phosphate + NADH + H(+). It carries out the reaction (6S)-NADPHX + ATP = ADP + phosphate + NADPH + H(+). Its function is as follows. Catalyzes the dehydration of the S-form of NAD(P)HX at the expense of ATP, which is converted to ADP. Together with NAD(P)HX epimerase, which catalyzes the epimerization of the S- and R-forms, the enzyme allows the repair of both epimers of NAD(P)HX, a damaged form of NAD(P)H that is a result of enzymatic or heat-dependent hydration. In Pediculus humanus subsp. corporis (Body louse), this protein is ATP-dependent (S)-NAD(P)H-hydrate dehydratase.